The chain runs to 416 residues: Tyrosine--tRNA ligase (416 aa).

A 'HIGH' region motif is present at residues 55–64; it reads PTGSEIHLGH. The 'KMSKS' region signature appears at 249–253; that stretch reads KMSKS. ATP is bound at residue Lys252. Residues 352 to 416 form the S4 RNA-binding domain; that stretch reads TKAFHLLSSI…GKKTFRRISN (65 aa).

This sequence belongs to the class-I aminoacyl-tRNA synthetase family. TyrS type 2 subfamily. Homodimer.

Its subcellular location is the cytoplasm. It catalyses the reaction tRNA(Tyr) + L-tyrosine + ATP = L-tyrosyl-tRNA(Tyr) + AMP + diphosphate + H(+). Its function is as follows. Catalyzes the attachment of tyrosine to tRNA(Tyr) in a two-step reaction: tyrosine is first activated by ATP to form Tyr-AMP and then transferred to the acceptor end of tRNA(Tyr). This chain is Tyrosine--tRNA ligase, found in Prochlorococcus marinus (strain SARG / CCMP1375 / SS120).